The sequence spans 276 residues: ARL14 effector protein (276 aa).

Residues 158 to 177 are disordered; the sequence is KQTEFAPEGGKREKRKLTKA. Lys176 participates in a covalent cross-link: Glycyl lysine isopeptide (Lys-Gly) (interchain with G-Cter in SUMO2). A phosphoserine mark is found at Ser182 and Ser266.

In terms of assembly, interacts with ARL14 and MYO1E.

It is found in the cytoplasm. In terms of biological role, through its interaction with ARL14 and MYO1E, may connect MHC class II-containing cytoplasmic vesicles to the actin network and hence controls the movement of these vesicles along the actin cytoskeleton in dendritic cells. This chain is ARL14 effector protein (Arl14ep), found in Mus musculus (Mouse).